The chain runs to 320 residues: Malate dehydrogenase (320 aa).

NAD(+) is bound by residues 10–15 (GSGMIG) and D34. R83 and R89 together coordinate substrate. NAD(+) contacts are provided by residues N96 and 119-121 (ITN). N121 and R152 together coordinate substrate. Residue H176 is the Proton acceptor of the active site.

It belongs to the LDH/MDH superfamily. MDH type 3 family.

It carries out the reaction (S)-malate + NAD(+) = oxaloacetate + NADH + H(+). Catalyzes the reversible oxidation of malate to oxaloacetate. The chain is Malate dehydrogenase from Rhizobium rhizogenes (strain K84 / ATCC BAA-868) (Agrobacterium radiobacter).